The chain runs to 1053 residues: Zinc finger and BTB domain-containing protein 11 (1053 aa).

Acidic residues predominate over residues 141–156; it reads LDLESGEESNESEDDL. Positions 141 to 173 are disordered; the sequence is LDLESGEESNESEDDLSNFTSSPTTASKPAKKK. Over residues 157 to 168 the composition is skewed to low complexity; that stretch reads SNFTSSPTTASK. In terms of domain architecture, BTB spans 214-282; it reads CDVTLLIEGE…AYTSVLSFDF (69 aa). The disordered stretch occupies residues 546 to 566; it reads LVQRGKKMKQPKRDAKENTEE. The span at 556 to 566 shows a compositional bias: basic and acidic residues; it reads PKRDAKENTEE. C2H2-type zinc fingers lie at residues 569 to 591 and 597 to 619; these read HKCGECGMVFQRRYALIMHKLKH and YKCPLCKKQFQYSASLRAHLIRH. Positions 619–643 are disordered; sequence HTRKDAPSSSSSNSTSNEASGTSSE. The span at 626–642 shows a compositional bias: low complexity; sequence SSSSSNSTSNEASGTSS. 10 C2H2-type zinc fingers span residues 651–673, 679–701, 707–729, 735–757, 766–788, 794–816, 822–846, 858–880, 886–908, and 914–937; these read FICSICGRTLPKLYSLRIHMLKH, HACQVCGKTFIYKHGLKLHQSLH, FQCELCVKSFVTKRSLQEHMSIH, YLCSVCGKSFHRGSGLSKHFKKH, YHCTQCEKSFFEARDLRQHMNKH, FQCQFCDKCYSWKKDWYSHVKSH, YRCNICGKEFYEKALFRRHVKKATH, RVCEKCGRKFTQLREYRRHMNNH, FECLTCGVAWADARSLKRHVRTH, and YVCPVCSEAYIDARTLRKHMTKFH. Residue lysine 1043 forms a Glycyl lysine isopeptide (Lys-Gly) (interchain with G-Cter in SUMO2) linkage. At serine 1050 the chain carries Phosphoserine.

Its subcellular location is the nucleus. The protein localises to the nucleolus. May be involved in transcriptional regulation. In Homo sapiens (Human), this protein is Zinc finger and BTB domain-containing protein 11.